The chain runs to 602 residues: MHKYRTHNCNALQISDVGKEVKLSGWVHRRRDHGNLVFIDLRDHYGITQIVFTDQNLQLMEMASRLRYESVITVIGKVVARSGDTINDTLTTGHIEILAREFIVESAADTLPFVINTEKDAPEDLRLKHRFLDLRREKLHNNIILRSQIISHIRHLMTARGFTEFQTPILTASSPEGARDFLVPSRMHSGKFYALPQAPQQFKQLLMVSGFDRYFQIAPCFRDEDARADRSPGEFYQLDVEMSFVTQEDVFSTIEPVMYDLFTKFTDKKVSETPFIRIPYNESMLKYGSDKPDLRNPIIIADVTEIFRDSDFTIFRENIKKGSVVRAIPAPKAAAHARSFFDKMIEFAISEGAGGLGYIQFSKNDKAKGPVAKFLSPQQLESLKATVNISDGDAVFFVSDKKEKAAKLAGKVRIRISDELDLLEKDCFKFCWITDFPFYELNEETAKIDFSHNPFSMPQGGLDALKNAKTTAELLELTAYQYDIVCNGIELSSGAIRNHKPEIMYKAFSIAGYSEEEVNKRFGSMIRAFKFGAPPHGGIAPGIDRIVMLLAEATNIREIIAFPLNQQAEDLLMNAPNYVEDKALKELGIMLLPSARKNVEQE.

Glu-176 contributes to the L-aspartate binding site. An aspartate region spans residues 200 to 203; the sequence is QQFK. Positions 222 and 452 each coordinate L-aspartate. Position 222–224 (222–224) interacts with ATP; sequence RDE. Glu-490 contacts ATP. Arg-497 serves as a coordination point for L-aspartate. Residue 542–545 coordinates ATP; it reads GIDR.

It belongs to the class-II aminoacyl-tRNA synthetase family. Type 1 subfamily. Homodimer.

It is found in the cytoplasm. The catalysed reaction is tRNA(Asx) + L-aspartate + ATP = L-aspartyl-tRNA(Asx) + AMP + diphosphate. Aspartyl-tRNA synthetase with relaxed tRNA specificity since it is able to aspartylate not only its cognate tRNA(Asp) but also tRNA(Asn). Reaction proceeds in two steps: L-aspartate is first activated by ATP to form Asp-AMP and then transferred to the acceptor end of tRNA(Asp/Asn). The chain is Aspartate--tRNA(Asp/Asn) ligase from Rickettsia canadensis (strain McKiel).